The sequence spans 245 residues: Orotidine 5'-phosphate decarboxylase (245 aa).

Residues Asp22, Lys44, 71-80 (DLKFHDIPNT), Thr131, Arg192, Gln201, Gly221, and Arg222 contribute to the substrate site. Lys73 functions as the Proton donor in the catalytic mechanism.

This sequence belongs to the OMP decarboxylase family. Type 1 subfamily. In terms of assembly, homodimer.

It carries out the reaction orotidine 5'-phosphate + H(+) = UMP + CO2. The protein operates within pyrimidine metabolism; UMP biosynthesis via de novo pathway; UMP from orotate: step 2/2. Catalyzes the decarboxylation of orotidine 5'-monophosphate (OMP) to uridine 5'-monophosphate (UMP). In Salmonella gallinarum (strain 287/91 / NCTC 13346), this protein is Orotidine 5'-phosphate decarboxylase.